Reading from the N-terminus, the 489-residue chain is UDP-N-acetylmuramoyl-L-alanyl-D-glutamate--2,6-diaminopimelate ligase (489 aa).

UDP-N-acetyl-alpha-D-muramoyl-L-alanyl-D-glutamate is bound at residue Ser-34. 110 to 116 (GTAGKTS) is an ATP binding site. UDP-N-acetyl-alpha-D-muramoyl-L-alanyl-D-glutamate is bound by residues 152 to 153 (TT), Ser-179, Gln-185, and Arg-187. Lys-219 is modified (N6-carboxylysine). Residues Arg-383, 407–410 (DNPR), Gly-455, and Glu-459 each bind meso-2,6-diaminopimelate. A Meso-diaminopimelate recognition motif motif is present at residues 407–410 (DNPR).

The protein belongs to the MurCDEF family. MurE subfamily. Mg(2+) is required as a cofactor. In terms of processing, carboxylation is probably crucial for Mg(2+) binding and, consequently, for the gamma-phosphate positioning of ATP.

The protein resides in the cytoplasm. It carries out the reaction UDP-N-acetyl-alpha-D-muramoyl-L-alanyl-D-glutamate + meso-2,6-diaminopimelate + ATP = UDP-N-acetyl-alpha-D-muramoyl-L-alanyl-gamma-D-glutamyl-meso-2,6-diaminopimelate + ADP + phosphate + H(+). The protein operates within cell wall biogenesis; peptidoglycan biosynthesis. Catalyzes the addition of meso-diaminopimelic acid to the nucleotide precursor UDP-N-acetylmuramoyl-L-alanyl-D-glutamate (UMAG) in the biosynthesis of bacterial cell-wall peptidoglycan. In Agrobacterium fabrum (strain C58 / ATCC 33970) (Agrobacterium tumefaciens (strain C58)), this protein is UDP-N-acetylmuramoyl-L-alanyl-D-glutamate--2,6-diaminopimelate ligase.